The primary structure comprises 193 residues: Orotate phosphoribosyltransferase (193 aa).

5-phospho-alpha-D-ribose 1-diphosphate is bound at residue 117–125; sequence EDVVTTGLS. Positions 121 and 149 each coordinate orotate.

Belongs to the purine/pyrimidine phosphoribosyltransferase family. PyrE subfamily. As to quaternary structure, homodimer. Requires Mg(2+) as cofactor.

The enzyme catalyses orotidine 5'-phosphate + diphosphate = orotate + 5-phospho-alpha-D-ribose 1-diphosphate. It participates in pyrimidine metabolism; UMP biosynthesis via de novo pathway; UMP from orotate: step 1/2. In terms of biological role, catalyzes the transfer of a ribosyl phosphate group from 5-phosphoribose 1-diphosphate to orotate, leading to the formation of orotidine monophosphate (OMP). The protein is Orotate phosphoribosyltransferase of Erythrobacter litoralis (strain HTCC2594).